The chain runs to 148 residues: Histone H2A-like 3 (148 aa).

The interval 101 to 128 (DDTHSQVEEMPQSEEEEEEEEEKEEEMV) is disordered. Residues 111-127 (PQSEEEEEEEEEKEEEM) show a composition bias toward acidic residues.

It belongs to the histone H2A family. The nucleosome is a histone octamer containing two molecules each of H2A, H2B, H3 and H4 assembled in one H3-H4 heterotetramer and two H2A-H2B heterodimers. The octamer wraps approximately 147 bp of DNA.

The protein localises to the nucleus. Its subcellular location is the chromosome. Its function is as follows. Core component of nucleosome. Nucleosomes wrap and compact DNA into chromatin, limiting DNA accessibility to the cellular machineries which require DNA as a template. Histones thereby play a central role in transcription regulation, DNA repair, DNA replication and chromosomal stability. DNA accessibility is regulated via a complex set of post-translational modifications of histones, also called histone code, and nucleosome remodeling. The sequence is that of Histone H2A-like 3 from Homo sapiens (Human).